The sequence spans 387 residues: Galactokinase (387 aa).

Residue 33 to 36 (EHTD) participates in substrate binding. ATP-binding positions include Ser67 and 124 to 130 (GSGLSSS). Residues Ser130 and Glu162 each coordinate Mg(2+). The active-site Proton acceptor is Asp174. Tyr224 is a substrate binding site.

Belongs to the GHMP kinase family. GalK subfamily.

Its subcellular location is the cytoplasm. It carries out the reaction alpha-D-galactose + ATP = alpha-D-galactose 1-phosphate + ADP + H(+). It participates in carbohydrate metabolism; galactose metabolism. In terms of biological role, catalyzes the transfer of the gamma-phosphate of ATP to D-galactose to form alpha-D-galactose-1-phosphate (Gal-1-P). The polypeptide is Galactokinase (Ligilactobacillus salivarius (strain UCC118) (Lactobacillus salivarius)).